We begin with the raw amino-acid sequence, 344 residues long: Flavonoid 7-O-methyltransferase 1A (344 aa).

Asp-211 is a binding site for S-adenosyl-L-methionine. The Proton acceptor role is filled by His-249.

This sequence belongs to the class I-like SAM-binding methyltransferase superfamily. Cation-independent O-methyltransferase family. Homodimer.

The catalysed reaction is apigenin + S-adenosyl-L-methionine = genkwanin + S-adenosyl-L-homocysteine + H(+). It catalyses the reaction luteolin + S-adenosyl-L-methionine = luteolin 7-methyl ether + S-adenosyl-L-homocysteine + H(+). It carries out the reaction quercetin + S-adenosyl-L-methionine = rhamnetin + S-adenosyl-L-homocysteine + H(+). The enzyme catalyses (2S)-naringenin + S-adenosyl-L-methionine = (2S)-sakuranetin + S-adenosyl-L-homocysteine + H(+). The catalysed reaction is kaempferol + S-adenosyl-L-methionine = kaempferol 7-methyl ether + S-adenosyl-L-homocysteine + H(+). It catalyses the reaction isorhamnetin + S-adenosyl-L-methionine = rhamnacene + S-adenosyl-L-homocysteine + H(+). It carries out the reaction 4',7,8-trihydroxyflavone + S-adenosyl-L-methionine = 4',8-dihydroxy-7-methoxyflavone + S-adenosyl-L-homocysteine. The enzyme catalyses scutellarein + S-adenosyl-L-methionine = scutellarein 7-methyl ether + S-adenosyl-L-homocysteine. The protein operates within flavonoid metabolism. In terms of biological role, flavonoid 7-O-methyltransferase involved in the biosynthesis of polymethoxylated flavonoids natural products such as pebrellin, aroma compounds which contribute to the flavor of peppermint, and exhibit pharmacological activities such as anti-allergic, anti-oxidant, antibacterial, anti-proliferative, and anti-inflammatory effects. Catalyzes S-adenosylmethionine-dependent regioselective 7-O-methylation of flavonoids; active on various hydroxylated flavonoid substrates, including luteolin (LUT), quercetin, kaempferol, isorhamnetin, apigenin (API), scutellarein (6-hydroxy-apigenin, 6-OH-API, SCU), 7,8,4'-trihydroxy-flavone and naringenin (NAR), and, with a lower efficiency, 7,8,3',4'-tetrahydroxy-flavone, taxifolin, hesperetin and genistein. This is Flavonoid 7-O-methyltransferase 1A from Mentha piperita (Peppermint).